The primary structure comprises 244 residues: 5-oxoprolinase subunit A (244 aa).

Belongs to the LamB/PxpA family. As to quaternary structure, forms a complex composed of PxpA, PxpB and PxpC.

The enzyme catalyses 5-oxo-L-proline + ATP + 2 H2O = L-glutamate + ADP + phosphate + H(+). Its function is as follows. Catalyzes the cleavage of 5-oxoproline to form L-glutamate coupled to the hydrolysis of ATP to ADP and inorganic phosphate. The chain is 5-oxoprolinase subunit A from Escherichia coli (strain K12).